The chain runs to 83 residues: Small ribosomal subunit protein bS18 (83 aa).

Belongs to the bacterial ribosomal protein bS18 family. In terms of assembly, part of the 30S ribosomal subunit. Forms a tight heterodimer with protein bS6.

Binds as a heterodimer with protein bS6 to the central domain of the 16S rRNA, where it helps stabilize the platform of the 30S subunit. The polypeptide is Small ribosomal subunit protein bS18 (Tropheryma whipplei (strain TW08/27) (Whipple's bacillus)).